The following is a 471-amino-acid chain: V-type ATP synthase beta chain (471 aa).

It belongs to the ATPase alpha/beta chains family.

Functionally, produces ATP from ADP in the presence of a proton gradient across the membrane. The V-type beta chain is a regulatory subunit. This Streptococcus pyogenes serotype M49 (strain NZ131) protein is V-type ATP synthase beta chain.